The primary structure comprises 612 residues: Rhotekin-2 (612 aa).

The REM-1 domain occupies 3–79 (IKRKKIRESA…LRSQMGESNT (77 aa)). Positions 285 to 392 (DEAMMGFLNQ…WMEAFWQHFY (108 aa)) constitute a PH domain. Disordered regions lie at residues 483 to 530 (RNKP…SDKE) and 574 to 612 (ENKA…QSQV). Positions 486 to 498 (PPLLSSDDPSTSS) are enriched in low complexity.

The protein is Rhotekin-2 (rtkn2) of Xenopus laevis (African clawed frog).